Consider the following 216-residue polypeptide: UPF0598 protein C8orf82 (216 aa).

This sequence belongs to the UPF0598 family.

The chain is UPF0598 protein C8orf82 (C8orf82) from Homo sapiens (Human).